Reading from the N-terminus, the 218-residue chain is Protein P9 (218 aa).

Its subcellular location is the virion membrane. The sequence is that of Protein P9 (IX) from Pseudoalteromonas espejiana (Bacteriophage PM2).